Reading from the N-terminus, the 173-residue chain is Phosphopantetheine adenylyltransferase (173 aa).

Threonine 9 provides a ligand contact to substrate. ATP contacts are provided by residues threonine 9–phenylalanine 10 and histidine 17. Residues lysine 41, threonine 75, and arginine 89 each contribute to the substrate site. ATP contacts are provided by residues glycine 90–arginine 92, glutamate 100, and histidine 125–serine 131.

This sequence belongs to the bacterial CoaD family. As to quaternary structure, homohexamer. Requires Mg(2+) as cofactor.

It localises to the cytoplasm. The enzyme catalyses (R)-4'-phosphopantetheine + ATP + H(+) = 3'-dephospho-CoA + diphosphate. It participates in cofactor biosynthesis; coenzyme A biosynthesis; CoA from (R)-pantothenate: step 4/5. Its function is as follows. Reversibly transfers an adenylyl group from ATP to 4'-phosphopantetheine, yielding dephospho-CoA (dPCoA) and pyrophosphate. This Methylacidiphilum infernorum (isolate V4) (Methylokorus infernorum (strain V4)) protein is Phosphopantetheine adenylyltransferase.